The primary structure comprises 122 residues: Large ribosomal subunit protein eL34 (122 aa).

Belongs to the eukaryotic ribosomal protein eL34 family. As to quaternary structure, component of the large ribosomal subunit. Mature ribosomes consist of a small (40S) and a large (60S) subunit. The 40S subunit contains about 32 different proteins and 1 molecule of RNA (18S). The 60S subunit contains 45 different proteins and 3 molecules of RNA (25S, 5.8S and 5S).

Its subcellular location is the cytoplasm. Component of the ribosome, a large ribonucleoprotein complex responsible for the synthesis of proteins in the cell. The small ribosomal subunit (SSU) binds messenger RNAs (mRNAs) and translates the encoded message by selecting cognate aminoacyl-transfer RNA (tRNA) molecules. The large subunit (LSU) contains the ribosomal catalytic site termed the peptidyl transferase center (PTC), which catalyzes the formation of peptide bonds, thereby polymerizing the amino acids delivered by tRNAs into a polypeptide chain. The nascent polypeptides leave the ribosome through a tunnel in the LSU and interact with protein factors that function in enzymatic processing, targeting, and the membrane insertion of nascent chains at the exit of the ribosomal tunnel. In Candida albicans (strain SC5314 / ATCC MYA-2876) (Yeast), this protein is Large ribosomal subunit protein eL34.